Reading from the N-terminus, the 169-residue chain is Photosystem I assembly protein Ycf3 (169 aa).

TPR repeat units lie at residues 35–68 (AFTYYRDGMSAQSEGEYAEASQNYYEAMRLEIDP), 72–105 (SYILHNIGLIHTSNGEHARALEYYFQALERNPSL), and 120–153 (GEQAIQQGDFETSEAWFGKAADHWKQAVLLAPGN).

Belongs to the Ycf3 family.

The protein localises to the plastid. The protein resides in the chloroplast thylakoid membrane. Functionally, essential for the assembly of the photosystem I (PSI) complex. May act as a chaperone-like factor to guide the assembly of the PSI subunits. This is Photosystem I assembly protein Ycf3 from Huperzia lucidula (Shining clubmoss).